The following is a 292-amino-acid chain: Glutathione S-transferase L2, chloroplastic (292 aa).

The transit peptide at 1–56 (MSVGLKVSAFLHPTLALSSRDVSLSSSSSSLYLDRKILRPGSGRRWCKSRRTEPIL) directs the protein to the chloroplast. One can recognise a GST N-terminal domain in the interval 79–160 (GSTRLYISYT…YIDTNFEGPS (82 aa)). Residues 89 to 90 (CP), 117 to 118 (NR), 131 to 132 (KV), and 144 to 145 (ES) contribute to the glutathione site. One can recognise a GST C-terminal domain in the interval 130–286 (NKVPALEHNN…ELVERYKRRV (157 aa)).

It belongs to the GST superfamily. Lambda family.

It is found in the plastid. It localises to the chloroplast. It carries out the reaction RX + glutathione = an S-substituted glutathione + a halide anion + H(+). Catalyzes the glutathione-dependent reduction of S-glutathionylquercetin to quercetin. In vitro, possesses glutathione-dependent thiol transferase activity toward 2-hydroxyethyl disulfide (HED). The polypeptide is Glutathione S-transferase L2, chloroplastic (GSTL2) (Arabidopsis thaliana (Mouse-ear cress)).